The primary structure comprises 176 residues: ATP synthase subunit b (176 aa).

The helical transmembrane segment at 26–45 threads the bilayer; that stretch reads VINLAIIIGVLVYFGRGLLG.

It belongs to the ATPase B chain family. As to quaternary structure, F-type ATPases have 2 components, F(1) - the catalytic core - and F(0) - the membrane proton channel. F(1) has five subunits: alpha(3), beta(3), gamma(1), delta(1), epsilon(1). F(0) has four main subunits: a(1), b(1), b'(1) and c(10-14). The alpha and beta chains form an alternating ring which encloses part of the gamma chain. F(1) is attached to F(0) by a central stalk formed by the gamma and epsilon chains, while a peripheral stalk is formed by the delta, b and b' chains.

The protein resides in the cellular thylakoid membrane. F(1)F(0) ATP synthase produces ATP from ADP in the presence of a proton or sodium gradient. F-type ATPases consist of two structural domains, F(1) containing the extramembraneous catalytic core and F(0) containing the membrane proton channel, linked together by a central stalk and a peripheral stalk. During catalysis, ATP synthesis in the catalytic domain of F(1) is coupled via a rotary mechanism of the central stalk subunits to proton translocation. Functionally, component of the F(0) channel, it forms part of the peripheral stalk, linking F(1) to F(0). The chain is ATP synthase subunit b from Synechococcus sp. (strain PCC 6716).